A 384-amino-acid chain; its full sequence is Chaperone protein DnaJ (384 aa).

Residues 5–70 enclose the J domain; sequence DYYEVLGVSK…DKKAAYDRYG (66 aa). The segment at 16 to 47 is disordered; sequence ASSDDIKKGYRRKAKELHPDRNKDDPNAEAQF. Positions 31-47 are enriched in basic and acidic residues; the sequence is ELHPDRNKDDPNAEAQF. A CR-type zinc finger spans residues 143–221; it reads GLQKTINVPT…CQGAGRVEKD (79 aa). 8 residues coordinate Zn(2+): Cys156, Cys159, Cys173, Cys176, Cys195, Cys198, Cys209, and Cys212. 4 CXXCXGXG motif repeats span residues 156–163, 173–180, 195–202, and 209–216; these read CKTCNGSG, CPTCSGMG, CPTCSGLG, and CKSCQGAG.

Belongs to the DnaJ family. As to quaternary structure, homodimer. Requires Zn(2+) as cofactor.

It localises to the cytoplasm. In terms of biological role, participates actively in the response to hyperosmotic and heat shock by preventing the aggregation of stress-denatured proteins and by disaggregating proteins, also in an autonomous, DnaK-independent fashion. Unfolded proteins bind initially to DnaJ; upon interaction with the DnaJ-bound protein, DnaK hydrolyzes its bound ATP, resulting in the formation of a stable complex. GrpE releases ADP from DnaK; ATP binding to DnaK triggers the release of the substrate protein, thus completing the reaction cycle. Several rounds of ATP-dependent interactions between DnaJ, DnaK and GrpE are required for fully efficient folding. Also involved, together with DnaK and GrpE, in the DNA replication of plasmids through activation of initiation proteins. The chain is Chaperone protein DnaJ from Roseobacter denitrificans (strain ATCC 33942 / OCh 114) (Erythrobacter sp. (strain OCh 114)).